A 1021-amino-acid chain; its full sequence is Transmembrane protein 132A (1021 aa).

An N-terminal signal peptide occupies residues 1–32; sequence MTERAAAAPRGPYGAWLCLLVALALEVVRVGS. The Extracellular portion of the chain corresponds to 33 to 848; the sequence is NQNTLDPIYL…VTDLELGMYA (816 aa). The disordered stretch occupies residues 207–226; that stretch reads PAGEGPGGCGPGTEEEPKEQ. Residue asparagine 276 is glycosylated (N-linked (GlcNAc...) asparagine). The interval 606 to 913 is binds to HSPA5/GRP78; the sequence is IEVRSPLSDS…QLDRCSSSSP (308 aa). The confers cellular localization similar to full-length form stretch occupies residues 666 to 1021; sequence LPAPKQEVAL…NYMERIRGSS (356 aa). The tract at residues 793-835 is disordered; that stretch reads AGDMGSHVGPGIRGKFERAEEEAGKEENEAKEEEEDEEEMVPA. The span at 806–820 shows a compositional bias: basic and acidic residues; that stretch reads GKFERAEEEAGKEEN. Positions 821–832 are enriched in acidic residues; sequence EAKEEEEDEEEM. Residues 849 to 869 form a helical membrane-spanning segment; the sequence is LLGIFCLAFLIFLVNGVVFVL. Residues 870 to 1021 lie on the Cytoplasmic side of the membrane; it reads RYQRKEPPDS…NYMERIRGSS (152 aa). Residues 903-955 form a disordered region; the sequence is RQLDRCSSSSPPKGEGGCPCESGAGGDTSTVAPSASESPAGSTSTLARKEAGG. Over residues 929–948 the composition is skewed to polar residues; the sequence is DTSTVAPSASESPAGSTSTL.

Belongs to the TMEM132 family. Interacts with HSPA5/GRP78. In terms of tissue distribution, expressed in the brain in neuronal cells of the hypothalamus, thalamus, cerebral cortex, amygdala, and cerebellum.

The protein localises to the golgi apparatus membrane. The protein resides in the endoplasmic reticulum membrane. Functionally, may play a role in embryonic and postnatal development of the brain. Increased resistance to cell death induced by serum starvation in cultured cells. Regulates cAMP-induced GFAP gene expression via STAT3 phosphorylation. The sequence is that of Transmembrane protein 132A (Tmem132a) from Rattus norvegicus (Rat).